The chain runs to 429 residues: Keratin, type I cytoskeletal 18 (429 aa).

The head stretch occupies residues 2 to 78; it reads SYSRSVYSSS…NVNLIGGGQN (77 aa). A coil 1A region spans residues 79 to 114; the sequence is EKETMQDLNDRLASYLERVRSLEAANKKLEVQIRQH. The IF rod domain occupies 79–389; it reads EKETMQDLND…RLLEGDGSFD (311 aa). The interval 115-130 is linker 1; that stretch reads TEKKGPSKDWSPYYKT. The tract at residues 131–222 is coil 1B; it reads IEDLRKQVFD…KNHQDDVTEL (92 aa). The tract at residues 223-246 is linker 12; that stretch reads QAQVARSAVTVEVDAPKSQDLGKI. Residues 247–385 form a coil 2 region; the sequence is MTELRAQYDG…HTYRRLLEGD (139 aa). Residues 386-429 are tail; the sequence is GSFDLQDAVPTVTTQTVKKVITTTQRIVDGKVVSESNDTEVLKS.

This sequence belongs to the intermediate filament family. In terms of assembly, heterotetramer of two type I and two type II keratins. Keratin-18 associates with keratin-8. Phosphorylated. In terms of processing, proteolytically cleaved by caspases during epithelial cell apoptosis.

Its function is as follows. When phosphorylated, plays a role in filament reorganization. The chain is Keratin, type I cytoskeletal 18 from Xenopus tropicalis (Western clawed frog).